Reading from the N-terminus, the 245-residue chain is Complement C1q subcomponent subunit C (245 aa).

An N-terminal signal peptide occupies residues 1 to 28 (MVVGTSCQPQHGLYLLLLLLALPLRSQA). The region spanning 31–112 (GCYGIPGMPG…GPPGEPGEEG (82 aa)) is the Collagen-like domain. 4-hydroxyproline is present on residues Pro36, Pro39, Pro42, Pro45, and Pro63. A disordered region spans residues 42-119 (PGTPGKDGHD…EEGRYKQKHQ (78 aa)). A 5-hydroxylysine modification is found at Lys75. O-linked (Gal...) hydroxylysine glycosylation is present at Lys75. 4-hydroxyproline occurs at positions 81, 96, 99, and 105. A compositionally biased stretch (pro residues) spans 98–107 (DPGPRGPPGE). Positions 115–245 (KQKHQSVFTV…VFSGFLLFPD (131 aa)) constitute a C1q domain. Cys179 and Cys193 form a disulfide bridge.

Core component of the complement C1 complex, a calcium-dependent complex composed of 1 molecule of the C1Q subcomplex, 2 molecules of C1R and 2 molecules of C1S. The C1Q subcomplex is composed 18 subunits: 3 chains of C1QA, C1QB, and C1QC trimerize to form 6 collagen-like triple helices connected to six globular ligand-recognition modules (C1q domain). O-linked glycans consist of Glc-Gal disaccharides bound to the oxygen atom of post-translationally added hydroxyl groups.

It is found in the secreted. It localises to the cell surface. Its activity is regulated as follows. The C1Q subcomplex is inhibited by sulfated molecules, such as triterpenoid sulfates, heparan sulfate, or chondroitin sulfates. Functionally, core component of the complement C1 complex, a multiprotein complex that initiates the classical pathway of the complement system, a cascade of proteins that leads to phagocytosis and breakdown of pathogens and signaling that strengthens the adaptive immune system. The classical complement pathway is initiated by the C1Q subcomplex of the C1 complex, which specifically binds IgG or IgM immunoglobulins complexed with antigens, forming antigen-antibody complexes on the surface of pathogens: C1QA, together with C1QB and C1QC, specifically recognizes and binds the Fc regions of IgG or IgM via its C1q domain. Immunoglobulin-binding activates the proenzyme C1R, which cleaves C1S, initiating the proteolytic cascade of the complement system. The C1Q subcomplex is activated by a hexamer of IgG complexed with antigens, while it is activated by a pentameric IgM. The C1Q subcomplex also recognizes and binds phosphatidylserine exposed on the surface of cells undergoing programmed cell death, possibly promoting activation of the complement system. In Rattus norvegicus (Rat), this protein is Complement C1q subcomponent subunit C.